Reading from the N-terminus, the 626-residue chain is Carnitine O-acetyltransferase (626 aa).

The residue at position 93 (Lys-93) is an N6-succinyllysine. An N6-acetyllysine; alternate modification is found at Lys-261. Lys-261 is subject to N6-succinyllysine; alternate. Lys-268 carries the post-translational modification N6-acetyllysine. The active-site Proton acceptor is the His-343. Residues Lys-419 and 423-430 (KSEKLSPD) contribute to the CoA site. The (R)-carnitine site is built by Tyr-452 and Ser-454. Ser-456 serves as a coordination point for CoA. Thr-465 is a (R)-carnitine binding site. The CoA site is built by Arg-504 and Gln-555. The short motif at 624–626 (AKL) is the Microbody targeting signal element.

The protein belongs to the carnitine/choline acetyltransferase family. Monomer.

It localises to the endoplasmic reticulum. The protein resides in the peroxisome. The protein localises to the mitochondrion inner membrane. It catalyses the reaction (R)-carnitine + acetyl-CoA = O-acetyl-(R)-carnitine + CoA. The catalysed reaction is propanoyl-CoA + (R)-carnitine = O-propanoyl-(R)-carnitine + CoA. It carries out the reaction butanoyl-CoA + (R)-carnitine = O-butanoyl-(R)-carnitine + CoA. The enzyme catalyses hexanoyl-CoA + (R)-carnitine = O-hexanoyl-(R)-carnitine + CoA. It catalyses the reaction octanoyl-CoA + (R)-carnitine = O-octanoyl-(R)-carnitine + CoA. The catalysed reaction is decanoyl-CoA + (R)-carnitine = O-decanoyl-(R)-carnitine + CoA. It carries out the reaction 3-methylbutanoyl-CoA + (R)-carnitine = O-3-methylbutanoyl-(R)-carnitine + CoA. The enzyme catalyses 2-methylpropanoyl-CoA + (R)-carnitine = O-isobutanoyl-(R)-carnitine + CoA. It catalyses the reaction 2-methylbutanoyl-CoA + (R)-carnitine = O-2-methylbutanoyl-(R)-carnitine + CoA. The catalysed reaction is acetoacetyl-CoA + (R)-carnitine = O-3-oxobutanoyl-(R)-carnitine + CoA. It carries out the reaction 3-hydroxybutanoyl-CoA + (R)-carnitine = O-3-hydroxybutanoyl-(R)-carnitine + CoA. The enzyme catalyses 4,8-dimethylnonanoyl-CoA + (R)-carnitine = O-4,8-dimethylnonanoyl-(R)-carnitine + CoA. It catalyses the reaction 2,6-dimethylheptanoyl-CoA + (R)-carnitine = O-2,6-dimethylheptanoyl-(R)-carnitine + CoA. Its function is as follows. Catalyzes the reversible transfer of acyl groups from carnitine to coenzyme A (CoA) and regulates the acyl-CoA/CoA ratio. Also plays a crucial role in the transport of fatty acids for beta-oxidation. Responsible for the synthesis of short- and branched-chain acylcarnitines. Active towards some branched-chain amino acid oxidation pathway (BCAAO) intermediates. Trans-2-enoyl-CoAs and 2-methylacyl-CoAs are poor substrates. The sequence is that of Carnitine O-acetyltransferase from Mus musculus (Mouse).